Reading from the N-terminus, the 574-residue chain is MELLIHRLSAIFLTLAINALYLTSSQNITEEFYQSTCSAVSRGYFSALRTGWYTSVITIELSNIKETKCNGTDTKVKLIKQELDKYKNAVTELQLLMQNTPAANNRARREAPQYMNYTINTTKNLNVSISKKRKRRFLGFLLGVGSAIASGIAVSKVLHLEGEVNKIKNALLSTNKAVVSLSNGVSVLTSKVLDLKNYINNQLLPIVNQQSCRISNIETVIEFQQKNSRLLEINREFSVNAGVTTPLSTYMLTNSELLSLINDMPITNDQKKLMSSNVQIVRQQSYSIMSIIKEEVLAYVVQLPIYGVIDTPCWKLHTSPLCTTNIKEGSNICLTRTDRGWYCDNAGSVSFFPQADTCKVQSNRVFCDTMNSLTLPSEVSLCNTDIFNSKYDCKIMTSKTDISSSVITSLGAIVSCYGKTKCTASNKNRGIIKTFSNGCDYVSNKGVDTVSVGNTLYYVNKLEGKNLYVKGEPIINYYDPLVFPSDEFDASISQVNEKINQSLAFIRRSDELLHNVNTGKSTTNIMITTIIIVIIVVLLSLIAIGLLLYCKAKNTPVTLSKDQLSGINNIAFSK.

An N-terminal signal peptide occupies residues 1–25 (MELLIHRLSAIFLTLAINALYLTSS). Over 26–524 (QNITEEFYQS…NVNTGKSTTN (499 aa)) the chain is Extracellular. N-linked (GlcNAc...) asparagine; by host glycans are attached at residues Asn-27 and Asn-70. 7 disulfides stabilise this stretch: Cys-37–Cys-439, Cys-69–Cys-212, Cys-313–Cys-343, Cys-322–Cys-333, Cys-358–Cys-367, Cys-382–Cys-393, and Cys-416–Cys-422. A coiled-coil region spans residues 76–96 (VKLIKQELDKYKNAVTELQLL). N-linked (GlcNAc...) asparagine; by host glycosylation is found at Asn-116, Asn-120, and Asn-126. The interval 137-157 (FLGFLLGVGSAIASGIAVSKV) is fusion peptide. Residues 158 to 209 (LHLEGEVNKIKNALLSTNKAVVSLSNGVSVLTSKVLDLKNYINNQLLPIVNQ) are a coiled coil. Residues 481–516 (LVFPSDEFDASISQVNEKINQSLAFIRRSDELLHNV) adopt a coiled-coil conformation. A glycan (N-linked (GlcNAc...) asparagine; by host) is linked at Asn-500. The helical transmembrane segment at 525 to 550 (IMITTIIIVIIVVLLSLIAIGLLLYC) threads the bilayer. Cys-550 is lipidated: S-palmitoyl cysteine; by host. Topologically, residues 551–574 (KAKNTPVTLSKDQLSGINNIAFSK) are cytoplasmic.

This sequence belongs to the paramyxoviruses fusion glycoprotein family. In terms of assembly, homotrimer. Heterodimer with fusion protein F2; disulfide-linked. Interacts with host NCL; this interaction plays a role in viral entry into the host cell. As a heterodimer with F2, interacts with host heparan sulfate. As a heterodimer with F2, interacts with host IGF1R; this interaction activates PRKCZ/PKCzeta that recruits NCL/nucleolin from the host nucleus to the plasma membrane. Part of a complex composed of F1, F2 and G glycoproteins. As a heterodimer with F2, interacts with host RHOA; this interaction facilitates virus-induced syncytium formation. As to quaternary structure, homotrimer. Heterodimer with fusion protein F1; disulfide-linked. As a heterodimer with F1, interacts with host heparan sulfate. As a heterodimer with F1, interacts with host IGF1R; this interaction activates PRKCZ/PKCzeta that recruits NCL/nucleolin from the host nucleus to the plasma membrane. Part of a complex composed of F1, F2 and G glycoproteins. As a heterodimer with F1, interacts with host RHOA; this interaction facilitates virus-induced syncytium formation. Post-translationally, the F glycoprotein is synthesized as a F0 inactive precursor that is heavily N-glycosylated and processed at two sites by a host furin-like protease probably in the Golgi. The cleavage site between p27 and F1 may occur after endocytosis to yield the mature F1 and F2 proteins. Both cleavages are required for membrane fusion and p27 is released from the processed protein.

The protein resides in the host Golgi apparatus membrane. It localises to the virion membrane. It is found in the host cell membrane. Inactive precursor that is cleaved at two sites by a furin-like protease to give rise to the mature F1 and F2 fusion glycoproteins. Its function is as follows. Class I viral fusion protein. Under the current model, the protein has at least 3 conformational states: pre-fusion native state, pre-hairpin intermediate state, and post-fusion hairpin state. During viral and plasma cell membrane fusion, the coiled coil regions assume a trimer-of-hairpins structure, positioning the fusion peptide in close proximity to the C-terminal region of the ectodomain. The formation of this structure appears to drive apposition and subsequent fusion of viral and cellular membranes leading to delivery of the nucleocapsid into the cytoplasm. This fusion is pH independent and occurs at the plasma or endosomal membrane. The trimer of F1-F2 (F protein) also facilitates the attachment to host cell by binding to host heparan sulfate. F protein is involved in the entry into the host cell through the interaction with host IGF1R. This interaction activates PRKCZ/PKCzeta that recruits host NCL/nucleolin to the apical cell surface where it can bind fusion glycoprotein F1. Later in infection, F protein expressed at the plasma membrane of infected cells can mediate fusion with adjacent cells to form syncytia, a cytopathic effect that could lead to tissue necrosis. F protein may trigger p53-dependent apoptosis. Functionally, major determinant of the species specificity of RSV infection. The trimer of F1-F2 (F protein) also facilitates the attachment to host cell by binding to host heparan sulfate. F protein is involved in the entry into the host cell through the interaction with host IGF1R. This interaction activates PRKCZ/PKCzeta that recruits host NCL/nucleolin to the apical cell surface where it can bind fusion glycoprotein F1. Later in infection, F protein expressed at the plasma membrane of infected cells can mediate fusion with adjacent cells to form syncytia, a cytopathic effect that could lead to tissue necrosis. F protein seems to trigger p53-dependent apoptosis. The sequence is that of Fusion glycoprotein F0 (F) from Human respiratory syncytial virus B (strain B1).